We begin with the raw amino-acid sequence, 65 residues long: MPGVKVKESEPFELALKKFKKQCEKAGILSEVRKREHFEKPSIKRKKKAIAARKRALKKQRKMMD.

Residues 39–65 (EKPSIKRKKKAIAARKRALKKQRKMMD) are disordered. A compositionally biased stretch (basic residues) spans 43–65 (IKRKKKAIAARKRALKKQRKMMD).

Belongs to the bacterial ribosomal protein bS21 family.

The polypeptide is Small ribosomal subunit protein bS21 (Pelobacter propionicus (strain DSM 2379 / NBRC 103807 / OttBd1)).